A 203-amino-acid chain; its full sequence is Ras-related protein Rab-18 (203 aa).

S20, G23, K24, S25, S26, D37, P38, T43, G69, K126, D128, and A155 together coordinate GTP. The short motif at Q40 to F48 is the Effector region element. Residues C201 and C203 are each lipidated (S-geranylgeranyl cysteine). C203 carries the cysteine methyl ester modification.

Belongs to the small GTPase superfamily. Rab family.

The catalysed reaction is GTP + H2O = GDP + phosphate + H(+). The small GTPases Rab are key regulators of intracellular membrane trafficking, from the formation of transport vesicles to their fusion with membranes. Rabs cycle between an inactive GDP-bound form and an active GTP-bound form that is able to recruit to membranes different sets of downstream effectors directly responsible for vesicle formation, movement, tethering and fusion. Plays a role in apical endocytosis/recycling. May be implicated in transport between the plasma membrane and early endosomes. Plays a role in the shedding of pathogen spores from intestinal cells. The protein is Ras-related protein Rab-18 (rab-18) of Caenorhabditis elegans.